The chain runs to 766 residues: 1,4-alpha-glucan branching enzyme GlgB (766 aa).

Aspartate 431 functions as the Nucleophile in the catalytic mechanism. The active-site Proton donor is glutamate 484.

This sequence belongs to the glycosyl hydrolase 13 family. GlgB subfamily. As to quaternary structure, monomer.

The enzyme catalyses Transfers a segment of a (1-&gt;4)-alpha-D-glucan chain to a primary hydroxy group in a similar glucan chain.. Its pathway is glycan biosynthesis; glycogen biosynthesis. Catalyzes the formation of the alpha-1,6-glucosidic linkages in glycogen by scission of a 1,4-alpha-linked oligosaccharide from growing alpha-1,4-glucan chains and the subsequent attachment of the oligosaccharide to the alpha-1,6 position. The chain is 1,4-alpha-glucan branching enzyme GlgB from Thermosynechococcus vestitus (strain NIES-2133 / IAM M-273 / BP-1).